The primary structure comprises 363 residues: MKDNFSFAATSRNITSSLPFVNLNMSGTNDLIFNCSHKPSDKHLEAIPVLYYLIFVIGFAVNIIVVSLFCCQKGPKKVSSIYIFNLAVADLLLLATLPLWATYYSYRYDWLFGPVMCKVFGSFLTLNMFASIFFITCMSVDRYQSVIYPFLSQRRNPWQASYVVPLVWCMACLSSLPTFYFRDVRTIEYLGVNACVMAFPPEKYAQWSAGIALMKNVLGFIIPLIFIATCYFGIRKHLLKTNSYGKNRITRDQVLKMAAAVVLAFIICWLPFHVLTFLDALSWMGIINSCEVMAVIDLALPFAILLGFTNSCVNPFLYCFVGNRFQQKLRSMFRVPITWLQGKRETMSCRKSSSLREMDTFVS.

Residues 1–45 (MKDNFSFAATSRNITSSLPFVNLNMSGTNDLIFNCSHKPSDKHLE) lie on the Extracellular side of the membrane. Residues Asn4, Asn13, Asn24, and Asn34 are each glycosylated (N-linked (GlcNAc...) asparagine). 2 cysteine pairs are disulfide-bonded: Cys35-Cys290 and Cys117-Cys195. Residues 46 to 70 (AIPVLYYLIFVIGFAVNIIVVSLFC) form a helical membrane-spanning segment. The Cytoplasmic portion of the chain corresponds to 71 to 80 (CQKGPKKVSS). The helical transmembrane segment at 81–104 (IYIFNLAVADLLLLATLPLWATYY) threads the bilayer. Residues Tyr103 and Tyr104 each coordinate angiotensin II. Over 105-114 (SYRYDWLFGP) the chain is Extracellular. Residues 115-140 (VMCKVFGSFLTLNMFASIFFITCMSV) traverse the membrane as a helical segment. Over 141-159 (DRYQSVIYPFLSQRRNPWQ) the chain is Cytoplasmic. The helical transmembrane segment at 160 to 181 (ASYVVPLVWCMACLSSLPTFYF) threads the bilayer. Residues Arg182, Tyr204, and Lys215 each coordinate angiotensin II. At 182–206 (RDVRTIEYLGVNACVMAFPPEKYAQ) the chain is on the extracellular side. The chain crosses the membrane as a helical span at residues 207–232 (WSAGIALMKNVLGFIIPLIFIATCYF). The Cytoplasmic segment spans residues 233–257 (GIRKHLLKTNSYGKNRITRDQVLKM). Residues 258–281 (AAAVVLAFIICWLPFHVLTFLDAL) traverse the membrane as a helical segment. Asp279 contributes to the angiotensin II binding site. At 282-294 (SWMGIINSCEVMA) the chain is on the extracellular side. The chain crosses the membrane as a helical span at residues 295 to 320 (VIDLALPFAILLGFTNSCVNPFLYCF). Asp297 contributes to the angiotensin II binding site. Residues 321-363 (VGNRFQQKLRSMFRVPITWLQGKRETMSCRKSSSLREMDTFVS) are Cytoplasmic-facing. The helix VIII stretch occupies residues 324–333 (RFQQKLRSMF). Ser354 carries the phosphoserine; by PKC modification.

Belongs to the G-protein coupled receptor 1 family. As to quaternary structure, interacts with MTUS1.

Its subcellular location is the cell membrane. Functionally, receptor for angiotensin II, a vasoconstricting peptide. Signals primarily via a non-canonical G-protein- and beta-arrestin independent pathways. Cooperates with MTUS1 to inhibit ERK2 activation and cell proliferation. This chain is Type-2 angiotensin II receptor (AGTR2), found in Meriones unguiculatus (Mongolian jird).